Reading from the N-terminus, the 770-residue chain is MLSNRAFGETIEEYEVQHLLGKGGFASVYKARCLHTHQDVAIKMIDKKLIQGTGLTNRVRQEVEIHSRLKHPSVLQLYTFFQDANYVYLVLELAHNGELHRYMNHIGRPFTEAEAASILRQVVAGLLYLHSHNIMHRDISLSNLLLSKEMHVKIADFGLATQLKRPDERHVTMCGTPNYISPEVVSRTSHGLPADVWSVGCMLYTLLVGRPPFETDAVQTTLNKVVLSEYIMPTHLSFEAQDLINKLLKKVPHERIALEHVLRHPFLTKRLENSSNGVYSTPGALNVFSQSLESGDSGIITFASSDSRNSQRLRSVENTAPLQGLPQIQEEYMQDKYRPTYDQPGLFKQPSSTRMEHNWLTTEKDTPFRMDVPMKEKPAPLKEERISVPPLNTKRLLPTRYKTKNAIMSILRNGEVVLEFLKYRPKFNEDRVTDICRISDDGRRIIIYQPDPGRGLPIRDHPPELQIPNEDCVYNYDSLPSKHWKKYVYADRFVGLVKSKTPKVTYFSALGKCQLMETMTDFEIRFYSGAKLTKSPSEGLKVHNANGMLLSDHVGSEARSMIDHGNECFTHCVSISNALEMAQTKDNSCFPVTIGRRPVTEVQPSQRLDGLRDTTNFAYSTPKSNQGSINFSVSTISSIRNTTDFGSNSSRTNMRASQQNIPIKRINLPDIGVATELSHGVVQVQFYDGSVVSIIPDIQGGGVTYTQSNGISTHFGKDDDLPFTVREKLSQLPHIQLKLKTAPLLSNSRKIEFNAMTPKTTTPCYNRMLL.

The region spanning 14 to 267 is the Protein kinase domain; it reads YEVQHLLGKG…LEHVLRHPFL (254 aa). ATP-binding positions include 20 to 28 and lysine 43; that span reads LGKGGFASV. Aspartate 138 acts as the Proton acceptor in catalysis. The 118-residue stretch at 383–500 folds into the Cryptic POLO box 1 (CPB1) domain; sequence EERISVPPLN…DRFVGLVKSK (118 aa). The 104-residue stretch at 501–604 folds into the Cryptic POLO box 2 (CPB2) domain; sequence TPKVTYFSAL…GRRPVTEVQP (104 aa). A POLO box domain is found at 662-741; sequence PIKRINLPDI…LPHIQLKLKT (80 aa).

This sequence belongs to the protein kinase superfamily. Ser/Thr protein kinase family. CDC5/Polo subfamily. In terms of assembly, homodimer. In terms of processing, ubiquitinated by the SCF(Slimb) ubiquitin ligase complex; leading to its degradation by the proteasome during interphase and regulating centriole number and ensuring the block to centriole reduplication.

Its subcellular location is the cytoplasm. It is found in the cytoskeleton. The protein resides in the microtubule organizing center. The protein localises to the centrosome. It localises to the centriole. The catalysed reaction is L-seryl-[protein] + ATP = O-phospho-L-seryl-[protein] + ADP + H(+). It catalyses the reaction L-threonyl-[protein] + ATP = O-phospho-L-threonyl-[protein] + ADP + H(+). In terms of biological role, serine/threonine-protein kinase that plays a central role in centriole duplication. Able to trigger procentriole formation on the surface of the mother centriole cylinder, using mother centriole as a platform, leading to the recruitment of centriole biogenesis proteins such as sas-6. When overexpressed, it is able to induce centrosome amplification through the simultaneous generation of multiple procentrioles adjoining each parental centriole during S phase. Centrosome amplification following overexpression can initiate tumorigenesis, highlighting the importance of centrosome regulation in cancers. This Drosophila ananassae (Fruit fly) protein is Serine/threonine-protein kinase PLK4 (SAK).